The primary structure comprises 363 residues: MSKNYHIAVLPGDGIGPEVMTQALKVLDAVRNRFAMRITTSHYDVGGAAIDNHGQPLPPATVEGCEQADAVLFGSVGGPKWEHLPPDQQPERGALLPLRKHFKLFSNLRPAKLYQGLEAFCPLRADIAANGFDILCVRELTGGIYFGQPKGREGSGQYEKAFDTEVYHRFEIERIARIAFESARKRRHKVTSIDKANVLQSSILWREIVNEIATEYPDIELAHMYIDNATMQLIKDPSQFDVLLCSNLFGDILSDECAMITGSMGMLPSASLNEQGFGLYEPAGGSAPDIAGKNIANPIAQILSLALLLRYSLDADDAASAIERAINRALEEGIRTGDLARGAAAVSTDEMGDIIARYVAEGV.

78 to 91 is an NAD(+) binding site; it reads GPKWEHLPPDQQPE. Substrate-binding residues include arginine 99, arginine 109, arginine 138, and aspartate 227. Mg(2+) contacts are provided by aspartate 227, aspartate 251, and aspartate 255. 285-297 contributes to the NAD(+) binding site; the sequence is GSAPDIAGKNIAN.

This sequence belongs to the isocitrate and isopropylmalate dehydrogenases family. LeuB type 1 subfamily. As to quaternary structure, homodimer. It depends on Mg(2+) as a cofactor. Mn(2+) serves as cofactor.

The protein localises to the cytoplasm. It catalyses the reaction (2R,3S)-3-isopropylmalate + NAD(+) = 4-methyl-2-oxopentanoate + CO2 + NADH. The protein operates within amino-acid biosynthesis; L-leucine biosynthesis; L-leucine from 3-methyl-2-oxobutanoate: step 3/4. Its function is as follows. Catalyzes the oxidation of 3-carboxy-2-hydroxy-4-methylpentanoate (3-isopropylmalate) to 3-carboxy-4-methyl-2-oxopentanoate. The product decarboxylates to 4-methyl-2 oxopentanoate. This is 3-isopropylmalate dehydrogenase from Escherichia coli O157:H7.